The chain runs to 549 residues: Leiomodin-2 (549 aa).

Positions 1 to 42 (MSTFGYRRGLSKYESIDEDELLASLTAEELKELERELEDIEP) are tropomyosin-binding. The interval 1–47 (MSTFGYRRGLSKYESIDEDELLASLTAEELKELERELEDIEPDRNLP) is interaction with tropomyosin alpha. Interaction with actin stretches follow at residues 1–164 (MSTF…PDNS), 165–499 (KPKT…KEIK), and 523–542 (AHEN…LRRV). Ser11, Ser15, and Ser24 each carry phosphoserine. Disordered regions lie at residues 91–166 (KLAE…NSKP), 179–200 (TNGN…HPCG), 358–455 (MDKQ…PGKK), and 469–534 (ESAQ…IRGS). 2 stretches are compositionally biased toward acidic residues: residues 95–105 (EDKEESEEELI) and 113–143 (VSEE…EEVT). 2 stretches are compositionally biased toward polar residues: residues 150-163 (INGT…NPDN) and 179-192 (TNGN…NTES). Basic and acidic residues predominate over residues 358 to 376 (MDKQRQKRMQEQKQQEGHD). A compositionally biased stretch (polar residues) spans 390–401 (TPGSSPYASPRQ). Ser406 carries the post-translational modification Phosphoserine. Pro residues predominate over residues 420-452 (PPSPVAPPPPPPPPPLPPHMLPPPPPPPAPPLP). Residues 457–515 (ITRNIAEVIKQQESAQRALQNGQRKKKGKKVKKQPNNILKEIKNSLRSVQEKKMEESSR) adopt a coiled-coil conformation. A compositionally biased stretch (polar residues) spans 469-478 (ESAQRALQNG). Over residues 479-489 (QRKKKGKKVKK) the composition is skewed to basic residues. The span at 496–514 (KEIKNSLRSVQEKKMEESS) shows a compositional bias: basic and acidic residues. A WH2 domain is found at 523-542 (AHENLMEAIRGSSIRQLRRV).

This sequence belongs to the tropomodulin family. In terms of assembly, can bind at least three actin monomers and thereby provides a nucleus for actin filament formation. Interacts (via N-terminus) with tropomyosin alpha (TPM1) (via N-terminus). May also interact with TPM2 (via N-terminus). Interacts with FLII.

The protein localises to the cytoplasm. It localises to the myofibril. It is found in the sarcomere. The protein resides in the m line. Its subcellular location is the cytoskeleton. Its function is as follows. Mediates nucleation of actin filaments and thereby promotes actin polymerization. Plays a role in the regulation of actin filament length. Required for normal sarcomere organization in the heart, and for normal heart function. The chain is Leiomodin-2 (Lmod2) from Rattus norvegicus (Rat).